The sequence spans 200 residues: Recombination protein RecR (200 aa).

The segment at cysteine 60 to cysteine 75 adopts a C4-type zinc-finger fold. In terms of domain architecture, Toprim spans threonine 83–proline 177.

Belongs to the RecR family.

Functionally, may play a role in DNA repair. It seems to be involved in an RecBC-independent recombinational process of DNA repair. It may act with RecF and RecO. This is Recombination protein RecR from Francisella tularensis subsp. holarctica (strain OSU18).